The following is a 243-amino-acid chain: Terpene cyclase ptmB (243 aa).

3 helical membrane passes run 19–39 (IANLFVLGMGLGWLINYVGMI), 48–68 (YGMAIMPLCCNIAWEIVYSLI), and 78–98 (GVFIAGLTINIGVMYAAIKFA). N-linked (GlcNAc...) asparagine glycosylation is present at asparagine 111. 4 consecutive transmembrane segments (helical) span residues 112–132 (LSLIFFLATLGFLTGHLALAA), 137–157 (SLAYSWGAVVCQLLLSVGGLC), 172–194 (LWLSRFLGSSCTVGFASLRWMYW), and 205–225 (LVLWSLALFLTVDGSYGICYW).

It belongs to the paxB family.

It localises to the membrane. It functions in the pathway secondary metabolite biosynthesis. Its function is as follows. Terpene cyclase; part of the gene cluster that mediates the biosynthesis of the indole diterpenes penitrems. The geranylgeranyl diphosphate (GGPP) synthase ptmG catalyzes the first step in penitrem biosynthesis via conversion of farnesyl pyrophosphate and isopentyl pyrophosphate into geranylgeranyl pyrophosphate (GGPP). Condensation of indole-3-glycerol phosphate with GGPP by the prenyl transferase ptmC then forms 3-geranylgeranylindole (3-GGI). Epoxidation by the FAD-dependent monooxygenase ptmM leads to a epoxidized-GGI that is substrate of the terpene cyclase ptmB for cyclization to yield paspaline. Paspaline is subsequently converted to 13-desoxypaxilline by the cytochrome P450 monooxygenase ptmP, the latter being then converted to paxilline by the cytochrome P450 monooxygenase ptmQ. Paxilline is converted to beta-paxitriol via C-10 ketoreduction by the short-chain dehydrogenase ptmH which can be monoprenylated at the C-20 by the indole diterpene prenyltransferase ptmD. A two-step elimination (acetylation and elimination) process performed by the O-acetyltransferase ptmV and ptmI leads to the production of the prenylated form of penijanthine. The FAD-linked oxidoreductase ptmO then converts the prenylated form of penijanthine into PC-M5 which is in turn transformed into PC-M4 by the aromatic dimethylallyltransferase ptmE. Five sequential oxidative transformations performed by the cytochrome P450 monooxygenases ptmK, ptmU, ptmL, ptmN and ptmJ yield the various penitrem compounds. PtmK, ptmU and ptmM are involved in the formation of the key bicyclic ring of penitrem C via the formation of the intermediates secopenitrem D and penitrem D. PtmL catalyzes the epoxidation of penitrem D and C to yield penitrem B and F, respectively. PtmJ catalyzes the last benzylic hydroxylation to convert penitrem B to prenitrem E and penitrem F to penitrem A. The polypeptide is Terpene cyclase ptmB (Penicillium ochrochloron).